A 369-amino-acid chain; its full sequence is MSGPNTNYDPVQVSALDADQVEARVAEALEAIARASTTAELKQVRITHTGDRSALALANREIGALPPAARKDAGKRIGQARGRVNQALKARQQELAEAELEARLAAETTDVTLPVVTSPQGAPHPITALIDNVCDVFTAMGWEVAEGPEAESEWFNFDALNLGTDHPARALQDTLWLDPVDDGKCMRTATSPVQIHTLLKQQPPVRIISPGKVFRADEYDATHLPVFHQVEGLCVDKGITMGHLKGTVDAFARAMFGAVRTRFRPHYFPFTEPSAEVDLECFVCHGASVGNPDRPCRTCRSEGWIEWGGCGVVNPRVLIACGIDTDVYSGFAFGMGIDRTVMFRNNAPDLRDFVEGDVRFSRSLRGGAR.

Position 272 (glutamate 272) interacts with Mg(2+).

Belongs to the class-II aminoacyl-tRNA synthetase family. Phe-tRNA synthetase alpha subunit type 1 subfamily. In terms of assembly, tetramer of two alpha and two beta subunits. Requires Mg(2+) as cofactor.

It localises to the cytoplasm. The enzyme catalyses tRNA(Phe) + L-phenylalanine + ATP = L-phenylalanyl-tRNA(Phe) + AMP + diphosphate + H(+). The protein is Phenylalanine--tRNA ligase alpha subunit of Cutibacterium acnes (strain DSM 16379 / KPA171202) (Propionibacterium acnes).